The chain runs to 162 residues: Solute carrier family 2, facilitated glucose transporter member 4 (162 aa).

The Extracellular portion of the chain corresponds to 1 to 13 (TSIFETAGVGQPA). Residues 14 to 34 (YATIGAGVVNTVFTLVSVFLV) traverse the membrane as a helical segment. Asparagine 23 serves as a coordination point for D-glucose. Residues 35–43 (ERAGRRTLH) are Cytoplasmic-facing. The chain crosses the membrane as a helical span at residues 44–64 (LLGLAGMCGCAILMTIALLLL). Residues 65-75 (ERLPAMSYVSI) are Extracellular-facing. The helical transmembrane segment at 76-96 (VAIFGFVAFFEIGPGPIPWFI) threads the bilayer. D-glucose-binding residues include glutamate 86 and tryptophan 94. Topologically, residues 97–107 (VAELFSQGPRP) are cytoplasmic. The chain crosses the membrane as a helical span at residues 108-128 (AAMAVAGFCNWTSNFIIGMGF). Residues 129–135 (QYIAXAM) are Extracellular-facing. Residues 136–156 (GPYVFLLFAVLLLAFFIFTFL) traverse the membrane as a helical segment. Residues 157 to 162 (KVPETR) are Cytoplasmic-facing.

Belongs to the major facilitator superfamily. Sugar transporter (TC 2.A.1.1) family. Glucose transporter subfamily. As to quaternary structure, binds to DAXX. Interacts via its N-terminus with SRFBP1. Interacts with NDUFA9. Interacts with TRARG1; the interaction is required for proper SLC2A4 recycling after insulin stimulation. Post-translationally, sumoylated. Palmitoylated. Palmitoylation by ZDHHC7 controls the insulin-dependent translocation of GLUT4 to the plasma membrane.

Its subcellular location is the cell membrane. The protein resides in the endomembrane system. It is found in the cytoplasm. It localises to the perinuclear region. It carries out the reaction D-glucose(out) = D-glucose(in). Functionally, insulin-regulated facilitative glucose transporter, which plays a key role in removal of glucose from circulation. Response to insulin is regulated by its intracellular localization: in the absence of insulin, it is efficiently retained intracellularly within storage compartments in muscle and fat cells. Upon insulin stimulation, translocates from these compartments to the cell surface where it transports glucose from the extracellular milieu into the cell. This is Solute carrier family 2, facilitated glucose transporter member 4 from Canis lupus familiaris (Dog).